A 159-amino-acid polypeptide reads, in one-letter code: Ribosomal RNA large subunit methyltransferase H (159 aa).

S-adenosyl-L-methionine contacts are provided by residues Leu-76, Gly-108, and 127 to 132 (FSKMTF).

Belongs to the RNA methyltransferase RlmH family. Homodimer.

Its subcellular location is the cytoplasm. It carries out the reaction pseudouridine(1915) in 23S rRNA + S-adenosyl-L-methionine = N(3)-methylpseudouridine(1915) in 23S rRNA + S-adenosyl-L-homocysteine + H(+). Functionally, specifically methylates the pseudouridine at position 1915 (m3Psi1915) in 23S rRNA. This Clostridium botulinum (strain Alaska E43 / Type E3) protein is Ribosomal RNA large subunit methyltransferase H.